A 271-amino-acid polypeptide reads, in one-letter code: Hydroxyethylthiazole kinase (271 aa).

Residue Met-45 coordinates substrate. 2 residues coordinate ATP: Arg-121 and Thr-168. Residue Gly-195 coordinates substrate.

This sequence belongs to the Thz kinase family. The cofactor is Mg(2+).

The catalysed reaction is 5-(2-hydroxyethyl)-4-methylthiazole + ATP = 4-methyl-5-(2-phosphooxyethyl)-thiazole + ADP + H(+). It functions in the pathway cofactor biosynthesis; thiamine diphosphate biosynthesis; 4-methyl-5-(2-phosphoethyl)-thiazole from 5-(2-hydroxyethyl)-4-methylthiazole: step 1/1. In terms of biological role, catalyzes the phosphorylation of the hydroxyl group of 4-methyl-5-beta-hydroxyethylthiazole (THZ). This is Hydroxyethylthiazole kinase from Bacillus pumilus (strain SAFR-032).